The following is a 548-amino-acid chain: NAD(P)H-quinone oxidoreductase chain 4 (548 aa).

14 consecutive transmembrane segments (helical) span residues Val17–Ile37, Trp48–Gly68, Leu103–Phe123, Leu127–Asp147, Leu149–Trp169, Phe181–Phe201, Gly222–Val242, Thr256–Leu276, Phe290–Phe310, Met327–Leu347, Gln348–Asp368, Phe389–Val409, Val430–Met450, and Val477–Met497.

Belongs to the complex I subunit 4 family.

Its subcellular location is the cellular thylakoid membrane. The enzyme catalyses a plastoquinone + NADH + (n+1) H(+)(in) = a plastoquinol + NAD(+) + n H(+)(out). It carries out the reaction a plastoquinone + NADPH + (n+1) H(+)(in) = a plastoquinol + NADP(+) + n H(+)(out). NDH-1 shuttles electrons from NAD(P)H, via FMN and iron-sulfur (Fe-S) centers, to quinones in the respiratory chain. The immediate electron acceptor for the enzyme in this species is believed to be plastoquinone. Couples the redox reaction to proton translocation (for every two electrons transferred, four hydrogen ions are translocated across the cytoplasmic membrane), and thus conserves the redox energy in a proton gradient. In Synechococcus sp. (strain CC9902), this protein is NAD(P)H-quinone oxidoreductase chain 4.